The sequence spans 293 residues: CDP-abequose synthase (293 aa).

Residue threonine 113 participates in substrate binding. The active-site Proton acceptor is the tyrosine 130.

Belongs to the NAD(P)-dependent epimerase/dehydratase family.

The enzyme catalyses CDP-alpha-D-abequose + NADP(+) = CDP-4-dehydro-3,6-dideoxy-alpha-D-glucose + NADPH + H(+). It participates in bacterial outer membrane biogenesis; LPS O-antigen biosynthesis. The protein is CDP-abequose synthase of Salmonella muenchen.